Consider the following 171-residue polypeptide: Signal peptidase complex catalytic subunit SEC11 (171 aa).

Over 1-6 (MNIRQQ) the chain is Cytoplasmic. A helical; Signal-anchor for type II membrane protein transmembrane segment spans residues 7–24 (LVQLLNLAMVLSTAFMFW). At 25–171 (KGLGLVTNSN…MALSTLLTRE (147 aa)) the chain is on the lumenal side. Catalysis depends on charge relay system residues Ser44, His83, and Asp113. The interval 157–168 (GLLGLMALSTLL) is C-terminal short (CTS) helix.

This sequence belongs to the peptidase S26B family. As to quaternary structure, component of the signal peptidase complex (SPC) composed of a catalytic subunit SEC11 and three accessory subunits SPC1, SPC2 and SPC3. The complex induces a local thinning of the ER membrane which is used to measure the length of the signal peptide (SP) h-region of protein substrates. This ensures the selectivity of the complex towards h-regions shorter than 18-20 amino acids. SPC associates with the translocon complex.

Its subcellular location is the endoplasmic reticulum membrane. It carries out the reaction Cleavage of hydrophobic, N-terminal signal or leader sequences from secreted and periplasmic proteins.. In terms of biological role, catalytic component of the signal peptidase complex (SPC) which catalyzes the cleavage of N-terminal signal sequences from nascent proteins as they are translocated into the lumen of the endoplasmic reticulum. Specifically cleaves N-terminal signal peptides that contain a hydrophobic alpha-helix (h-region) shorter than 18-20 amino acids. This chain is Signal peptidase complex catalytic subunit SEC11 (SEC11), found in Komagataella phaffii (strain GS115 / ATCC 20864) (Yeast).